Here is a 496-residue protein sequence, read N- to C-terminus: L-arabinose isomerase (496 aa).

Mn(2+)-binding residues include Glu-302, Glu-329, His-346, and His-445.

The protein belongs to the arabinose isomerase family. Mn(2+) is required as a cofactor.

The catalysed reaction is beta-L-arabinopyranose = L-ribulose. The protein operates within carbohydrate degradation; L-arabinose degradation via L-ribulose; D-xylulose 5-phosphate from L-arabinose (bacterial route): step 1/3. Functionally, catalyzes the conversion of L-arabinose to L-ribulose. The polypeptide is L-arabinose isomerase (Thermotoga sp. (strain RQ2)).